Consider the following 87-residue polypeptide: Cell division protein ZapA (87 aa).

Residues 64–87 are a coiled coil; it reads VHDYIKLKEEYDRLLQKLHKEKDE.

The protein belongs to the ZapA family. Type 2 subfamily. Homodimer. Interacts with FtsZ.

The protein resides in the cytoplasm. Functionally, activator of cell division through the inhibition of FtsZ GTPase activity, therefore promoting FtsZ assembly into bundles of protofilaments necessary for the formation of the division Z ring. It is recruited early at mid-cell but it is not essential for cell division. This Geobacillus sp. (strain WCH70) protein is Cell division protein ZapA.